Reading from the N-terminus, the 474-residue chain is Ribosomal protein uS12 methylthiotransferase RimO (474 aa).

In terms of domain architecture, MTTase N-terminal spans 37–147 (NRIGFVSLGC…VLNHVHKYVP (111 aa)). [4Fe-4S] cluster is bound by residues Cys46, Cys82, Cys111, Cys179, Cys183, and Cys186. The 238-residue stretch at 165-402 (LTPKHYAYLK…MEVQAEISAE (238 aa)) folds into the Radical SAM core domain. In terms of domain architecture, TRAM spans 405 to 471 (ARLVGRELDI…EHDLWAELVA (67 aa)).

This sequence belongs to the methylthiotransferase family. RimO subfamily. The cofactor is [4Fe-4S] cluster.

It localises to the cytoplasm. It carries out the reaction L-aspartate(89)-[ribosomal protein uS12]-hydrogen + (sulfur carrier)-SH + AH2 + 2 S-adenosyl-L-methionine = 3-methylsulfanyl-L-aspartate(89)-[ribosomal protein uS12]-hydrogen + (sulfur carrier)-H + 5'-deoxyadenosine + L-methionine + A + S-adenosyl-L-homocysteine + 2 H(+). Catalyzes the methylthiolation of an aspartic acid residue of ribosomal protein uS12. In Shewanella amazonensis (strain ATCC BAA-1098 / SB2B), this protein is Ribosomal protein uS12 methylthiotransferase RimO.